A 185-amino-acid chain; its full sequence is Elongation factor P (185 aa).

The protein belongs to the elongation factor P family.

It is found in the cytoplasm. It participates in protein biosynthesis; polypeptide chain elongation. Functionally, involved in peptide bond synthesis. Stimulates efficient translation and peptide-bond synthesis on native or reconstituted 70S ribosomes in vitro. Probably functions indirectly by altering the affinity of the ribosome for aminoacyl-tRNA, thus increasing their reactivity as acceptors for peptidyl transferase. This Deinococcus deserti (strain DSM 17065 / CIP 109153 / LMG 22923 / VCD115) protein is Elongation factor P.